A 1243-amino-acid chain; its full sequence is Protein MMS22-like (1243 aa).

Belongs to the MMS22 family. MMS22L subfamily. Component of the MMS22L-TONSL complex, a complex at least composed of MMS22L and TONSL/NFKBIL2. Interacts with RAD51; interaction is direct. In terms of processing, degraded by the ubiquitin-proteasome system upon replication stress.

The protein localises to the nucleus. Its subcellular location is the chromosome. In terms of biological role, component of the MMS22L-TONSL complex, a complex that promotes homologous recombination-mediated repair of double-strand breaks (DSBs) at stalled or collapsed replication forks. The MMS22L-TONSL complex is required to maintain genome integrity during DNA replication. It mediates the assembly of RAD51 filaments on single-stranded DNA (ssDNA): the MMS22L-TONSL complex is recruited to DSBs following histone replacement by histone chaperones and eviction of the replication protein A complex (RPA/RP-A) from DSBs. Following recruitment to DSBs, the TONSL-MMS22L complex promotes recruitment of RAD51 filaments and subsequent homologous recombination. Within the complex, MMS22L acts by binding ssDNA. In Homo sapiens (Human), this protein is Protein MMS22-like.